A 3032-amino-acid polypeptide reads, in one-letter code: Compactin nonaketide synthase, polyketide synthase component (3032 aa).

Positions 8 to 447 (NEPIVVVGSG…GTNAHAIIEE (440 aa)) constitute a Ketosynthase family 3 (KS3) domain. Residues C181, H320, and H367 each act as for beta-ketoacyl synthase activity in the active site. The segment at 560–901 (VFTGQGAQWP…GYIWERFGVR (342 aa)) is acyl and malonyl transferase. S654 serves as the catalytic For malonyltransferase activity. The segment at 953–1089 (HLLLGKLSSY…GQIVITLGEA (137 aa)) is N-terminal hotdog fold. The PKS/mFAS DH domain maps to 953–1261 (HLLLGKLSSY…FKPFSPPTAS (309 aa)). H985 (proton acceptor; for dehydratase activity) is an active-site residue. A dehydratase-like region spans residues 985–997 (HALQGQTVFPAAG). Residues 1106–1261 (MNNVNIDFFY…FKPFSPPTAS (156 aa)) are C-terminal hotdog fold. The Proton donor; for dehydratase activity role is filled by D1168. Residues 1506-1544 (YDLIIASDVLHASSNFEEKLAHIRSLLKPGGHLVTFGVT) are methyltransferase. The 80-residue stretch at 2441-2520 (DQVRQIVIDG…DLADDAATRL (80 aa)) folds into the Carrier domain. An O-(pantetheine 4'-phosphoryl)serine modification is found at S2480. The tract at residues 2531-2580 (IGDSTGTSDSGASPTPTDSHDEASSATSTDASSAEEDEEQEDDNEQGGRK) is disordered. Positions 2532–2547 (GDSTGTSDSGASPTPT) are enriched in low complexity. Acidic residues predominate over residues 2563–2575 (SAEEDEEQEDDNE). The interval 2586-2946 (RLSLGQEYSW…PKTQTHAPLF (361 aa)) is peptide synthetase elongation.

The cofactor is pantetheine 4'-phosphate.

The enzyme catalyses holo-[compactin nonaketide synthase] + 9 malonyl-CoA + 11 NADPH + 20 H(+) = dihydro-ML-236C-[compactin nonaketide synthase] + 9 CO2 + 11 NADP(+) + 9 CoA + 6 H2O. Its pathway is polyketide biosynthesis. Functionally, nonaketide synthase; part of the gene cluster that mediates the biosynthesis of compactin, also known as mevastatin or ML-236B, and which acts as a potent competitive inhibitor of HMG-CoA reductase. Compactin biosynthesis is performed in two stages. The first stage is catalyzed by the nonaketide synthase mlcA, which belongs to type I polyketide synthases and catalyzes the iterative nine-step formation of the polyketide. This PKS stage is completed by the action of dehydrogenase mlcG, which catalyzes the NADPH-dependent reduction of the unsaturated tetra-, penta- and heptaketide intermediates that arise during the mlcA-mediated biosynthesis of the nonaketide chain and leads to dihydro-ML-236C carboxylate. Covalently bound dihydro-ML-236C carboxylate is released from mlcA by the mlcF esterase. Conversion of dihydro-ML-236C carboxylate into ML-236A carboxylate is subsequently performed with the participation of molecular oxygen and P450 monoogygenase mlcC. Finally, mlcH performs the conversion of ML-236A carboxylate to ML-236B/compactin carboxylate through the addition of the side-chain diketide moiety produced by the diketide synthase mlcB. This Penicillium citrinum protein is Compactin nonaketide synthase, polyketide synthase component.